The following is a 379-amino-acid chain: Putative acetyl-CoA C-acetyltransferase VraB (379 aa).

The active-site Acyl-thioester intermediate is Cys86. The active-site Proton acceptor is His338.

Belongs to the thiolase-like superfamily. Thiolase family.

In Staphylococcus aureus (strain COL), this protein is Putative acetyl-CoA C-acetyltransferase VraB (vraB).